The following is a 153-amino-acid chain: 17.5 kDa class I heat shock protein (153 aa).

One can recognise a sHSP domain in the interval 39–153 (ENSAFVNTRV…PDVKAIEISG (115 aa)).

This sequence belongs to the small heat shock protein (HSP20) family. As to quaternary structure, forms oligomeric structures.

Its subcellular location is the cytoplasm. In Glycine max (Soybean), this protein is 17.5 kDa class I heat shock protein (HSP17.5-M).